The sequence spans 127 residues: Small ribosomal subunit protein bS6 (127 aa).

It belongs to the bacterial ribosomal protein bS6 family.

In terms of biological role, binds together with bS18 to 16S ribosomal RNA. The protein is Small ribosomal subunit protein bS6 of Buchnera aphidicola subsp. Cinara cedri (strain Cc).